Here is a 363-residue protein sequence, read N- to C-terminus: Fructose-bisphosphate aldolase C-B (363 aa).

Substrate is bound by residues Arg56 and Lys147. Glu188 acts as the Proton acceptor in catalysis. Lys230 serves as the catalytic Schiff-base intermediate with dihydroxyacetone-P.

It belongs to the class I fructose-bisphosphate aldolase family. Homotetramer.

The catalysed reaction is beta-D-fructose 1,6-bisphosphate = D-glyceraldehyde 3-phosphate + dihydroxyacetone phosphate. It functions in the pathway carbohydrate degradation; glycolysis; D-glyceraldehyde 3-phosphate and glycerone phosphate from D-glucose: step 4/4. This chain is Fructose-bisphosphate aldolase C-B (aldocb), found in Danio rerio (Zebrafish).